Consider the following 672-residue polypeptide: NADPH-Fe(3+) oxidoreductase subunit beta (672 aa).

Positions 203, 207, 211, and 215 each coordinate [4Fe-4S] cluster. An FAD-binding site is contributed by 254–283; that stretch reads KKVAIVGAGPAGLACAYYLALEGYPCTIYE. Residue 388–421 coordinates NADP(+); the sequence is GKKVVVVGGGNTAIDCVRVALREGAEESTLLYRR. 552–562 is an FAD binding site; it reads TDLEGVFAGGD.

In terms of assembly, heterotetramer with 2 alpha subunits. [4Fe-4S] cluster is required as a cofactor. It depends on FAD as a cofactor.

The protein localises to the cell membrane. Its function is as follows. Probably involved in acetate metabolism and not in the reduction of Fe(3+) chelates. May serve as a major route for NADP regeneration. The protein is NADPH-Fe(3+) oxidoreductase subunit beta (sfrB) of Geobacter sulfurreducens (strain DL-1 / KN400).